The sequence spans 158 residues: 6,7-dimethyl-8-ribityllumazine synthase (158 aa).

5-amino-6-(D-ribitylamino)uracil contacts are provided by residues phenylalanine 23, 61–63, and 85–87; these read SFE and AVI. (2S)-2-hydroxy-3-oxobutyl phosphate is bound at residue 90 to 91; the sequence is DT. Histidine 93 serves as the catalytic Proton donor. Position 118 (phenylalanine 118) interacts with 5-amino-6-(D-ribitylamino)uracil. Residue arginine 132 participates in (2S)-2-hydroxy-3-oxobutyl phosphate binding.

This sequence belongs to the DMRL synthase family.

The enzyme catalyses (2S)-2-hydroxy-3-oxobutyl phosphate + 5-amino-6-(D-ribitylamino)uracil = 6,7-dimethyl-8-(1-D-ribityl)lumazine + phosphate + 2 H2O + H(+). Its pathway is cofactor biosynthesis; riboflavin biosynthesis; riboflavin from 2-hydroxy-3-oxobutyl phosphate and 5-amino-6-(D-ribitylamino)uracil: step 1/2. Its function is as follows. Catalyzes the formation of 6,7-dimethyl-8-ribityllumazine by condensation of 5-amino-6-(D-ribitylamino)uracil with 3,4-dihydroxy-2-butanone 4-phosphate. This is the penultimate step in the biosynthesis of riboflavin. This Prochlorococcus marinus (strain NATL1A) protein is 6,7-dimethyl-8-ribityllumazine synthase.